A 327-amino-acid polypeptide reads, in one-letter code: Auxin-responsive protein IAA18 (327 aa).

3 disordered regions span residues 26-45, 52-98, and 180-202; these read VKEA…DEDK, GLPG…IGTT, and NLTN…DDKA. The short motif at 49 to 53 is the EAR-like (transcriptional repression) element; sequence LKLGL. The span at 58 to 69 shows a compositional bias: basic and acidic residues; sequence QEERAADSREKI. The span at 70–82 shows a compositional bias: low complexity; the sequence is QQQQRESSSEPSI. Residues 180-189 show a composition bias toward polar residues; sequence NLTNGSSFKQ. Basic and acidic residues predominate over residues 190–202; that stretch reads SPERQNDEADDKA. The region spanning 209–313 is the PB1 domain; the sequence is RPLVKINMDG…TVKRLRVMRR (105 aa).

The protein belongs to the Aux/IAA family. Homodimers and heterodimers. As to expression, highly expressed in flowers. Expressed in roots and etiolated seedlings.

It is found in the nucleus. Functionally, aux/IAA proteins are short-lived transcriptional factors that function as repressors of early auxin response genes at low auxin concentrations. The chain is Auxin-responsive protein IAA18 (IAA18) from Oryza sativa subsp. japonica (Rice).